The primary structure comprises 136 residues: Pilotin AspS 2 (136 aa).

The signal sequence occupies residues 1 to 24; the sequence is MSIKQMPGRVLISLLLSVTGLLSG. Cysteine 25 carries N-palmitoyl cysteine lipidation. Cysteine 25 carries S-diacylglycerol cysteine lipidation. Cysteine 94 and cysteine 131 are joined by a disulfide.

It belongs to the GspS/AspS pilotin family. In terms of assembly, cryo-electron microscopy shows that the complex forms a cylindrical channel with 15 GspD2 subunits, each of which interacts with its surrounding AspS2 (GspS-beta).

The protein resides in the cell outer membrane. Its function is as follows. Part of a type II secretion system (T2SS, formerly general secretion pathway, GSP) for the export of folded proteins across the outer membrane. Required for correct assembly of the type II secretion system-beta (T2SS-beta), for localization of GspD-beta to the cell outer membrane and for export of a labile enterotoxin by T2SS-beta. Each AspS2 binds to 2 GspD2 subunits and may clamp the monomers together, stabilizing structure and accelerating its assembly. The protein is Pilotin AspS 2 of Escherichia coli O78:H11 (strain H10407 / ETEC).